We begin with the raw amino-acid sequence, 151 residues long: Transcriptional repressor NrdR (151 aa).

The disordered stretch occupies residues 1–21; sequence MRCPFCGEADTQVKDSRPTED. A zinc finger spans residues 3-34; it reads CPFCGEADTQVKDSRPTEDGAAIRRRRFCPQC. The span at 11-21 shows a compositional bias: basic and acidic residues; that stretch reads TQVKDSRPTED. Residues 49 to 139 enclose the ATP-cone domain; sequence LVVVKADQRR…VYRDFREAKD (91 aa).

The protein belongs to the NrdR family. Zn(2+) is required as a cofactor.

In terms of biological role, negatively regulates transcription of bacterial ribonucleotide reductase nrd genes and operons by binding to NrdR-boxes. This Acidiphilium cryptum (strain JF-5) protein is Transcriptional repressor NrdR.